A 208-amino-acid chain; its full sequence is High frequency lysogenization protein HflD homolog (208 aa).

It belongs to the HflD family.

The protein localises to the cytoplasm. It is found in the cell inner membrane. The chain is High frequency lysogenization protein HflD homolog from Pseudomonas entomophila (strain L48).